Consider the following 100-residue polypeptide: Small ribosomal subunit protein uS14 (100 aa).

Belongs to the universal ribosomal protein uS14 family. As to quaternary structure, part of the 30S ribosomal subunit. Contacts proteins S3 and S10.

In terms of biological role, binds 16S rRNA, required for the assembly of 30S particles and may also be responsible for determining the conformation of the 16S rRNA at the A site. This chain is Small ribosomal subunit protein uS14, found in Acaryochloris marina (strain MBIC 11017).